The following is a 185-amino-acid chain: Large ribosomal subunit protein uL5 (185 aa).

Belongs to the universal ribosomal protein uL5 family. In terms of assembly, part of the 50S ribosomal subunit; part of the 5S rRNA/L5/L18/L25 subcomplex. Contacts the 5S rRNA and the P site tRNA. Forms a bridge to the 30S subunit in the 70S ribosome.

In terms of biological role, this is one of the proteins that bind and probably mediate the attachment of the 5S RNA into the large ribosomal subunit, where it forms part of the central protuberance. In the 70S ribosome it contacts protein S13 of the 30S subunit (bridge B1b), connecting the 2 subunits; this bridge is implicated in subunit movement. Contacts the P site tRNA; the 5S rRNA and some of its associated proteins might help stabilize positioning of ribosome-bound tRNAs. This is Large ribosomal subunit protein uL5 from Parvibaculum lavamentivorans (strain DS-1 / DSM 13023 / NCIMB 13966).